The primary structure comprises 217 residues: Probable GTP-binding protein EngB (217 aa).

In terms of domain architecture, EngB-type G spans 32-205; it reads GTPQIAFAGR…RKIVYSLIET (174 aa). GTP is bound by residues 40 to 47, 67 to 71, 85 to 88, 152 to 155, and 184 to 186; these read GRSNAGKS, GKTKL, DLPG, TKID, and VSN. Serine 47 and threonine 69 together coordinate Mg(2+).

It belongs to the TRAFAC class TrmE-Era-EngA-EngB-Septin-like GTPase superfamily. EngB GTPase family. It depends on Mg(2+) as a cofactor.

In terms of biological role, necessary for normal cell division and for the maintenance of normal septation. The protein is Probable GTP-binding protein EngB of Leptospira interrogans serogroup Icterohaemorrhagiae serovar copenhageni (strain Fiocruz L1-130).